Consider the following 33-residue polypeptide: Cytochrome b6-f complex subunit 8 (33 aa).

Residues 2–22 traverse the membrane as a helical segment; sequence IFTLGWASLAAIFTFSIAMVV.

Belongs to the PetN family. The 4 large subunits of the cytochrome b6-f complex are cytochrome b6, subunit IV (17 kDa polypeptide, PetD), cytochrome f and the Rieske protein, while the 4 small subunits are PetG, PetL, PetM and PetN. The complex functions as a dimer.

Its subcellular location is the cellular thylakoid membrane. In terms of biological role, component of the cytochrome b6-f complex, which mediates electron transfer between photosystem II (PSII) and photosystem I (PSI), cyclic electron flow around PSI, and state transitions. This chain is Cytochrome b6-f complex subunit 8, found in Prochlorococcus marinus (strain NATL2A).